Reading from the N-terminus, the 507-residue chain is Maturase K (507 aa).

This sequence belongs to the intron maturase 2 family. MatK subfamily.

The protein resides in the plastid. Its subcellular location is the chloroplast. Functionally, usually encoded in the trnK tRNA gene intron. Probably assists in splicing its own and other chloroplast group II introns. This is Maturase K from Ranunculus macranthus (Large buttercup).